Reading from the N-terminus, the 93-residue chain is Small ribosomal subunit protein uS19 (93 aa).

It belongs to the universal ribosomal protein uS19 family.

Its function is as follows. Protein S19 forms a complex with S13 that binds strongly to the 16S ribosomal RNA. This chain is Small ribosomal subunit protein uS19, found in Ehrlichia canis (strain Jake).